The primary structure comprises 236 residues: Purine nucleoside phosphorylase CA_C1699 (236 aa).

Positions 62, 97, and 114 each coordinate Zn(2+).

It belongs to the purine nucleoside phosphorylase YfiH/LACC1 family. Homodimer. The cofactor is Cu(2+). It depends on Zn(2+) as a cofactor.

The catalysed reaction is adenosine + phosphate = alpha-D-ribose 1-phosphate + adenine. The enzyme catalyses S-methyl-5'-thioadenosine + phosphate = 5-(methylsulfanyl)-alpha-D-ribose 1-phosphate + adenine. It catalyses the reaction inosine + phosphate = alpha-D-ribose 1-phosphate + hypoxanthine. It carries out the reaction adenosine + H2O + H(+) = inosine + NH4(+). In terms of biological role, purine nucleoside enzyme that catalyzes the phosphorolysis of adenosine and inosine nucleosides, yielding D-ribose 1-phosphate and the respective free bases, adenine and hypoxanthine. Also catalyzes the phosphorolysis of S-methyl-5'-thioadenosine into adenine and S-methyl-5-thio-alpha-D-ribose 1-phosphate. Also has adenosine deaminase activity. The sequence is that of Purine nucleoside phosphorylase CA_C1699 from Clostridium acetobutylicum (strain ATCC 824 / DSM 792 / JCM 1419 / IAM 19013 / LMG 5710 / NBRC 13948 / NRRL B-527 / VKM B-1787 / 2291 / W).